The chain runs to 362 residues: MQSYGNPDVTYGWWVGNSVVTNKSSRFIGSHVAHTGLICFAAGANTLWELARYNPDIPMGHQGMVSIPHLASIGIGFDPTGTVFDGTSIAFIGVFHLICSMVYAGAGLLHSLIFSEDTQNSSGLFADDRPEHRQAARYKLEWDNPDNQTFILGHHLIFFGVACIWFVEWARIHGIYDPAIGAVRQVEYNLNLTNIWNHQFDFLAIDSLEDVMGGHAFLAFVEITGGAFHIATKQTGEYTEFKGKNILSAEAVLSWSLAGIGWMAIIAAFWCATNTTVYPEAWYGETLALKFGISPYWIDTADMTGVVSGHTSRAWLANVHYYLGFFFIQGHLWHAIRALGFDFKKVTDAISNLDGARVTLTD.

6 helical membrane-spanning segments follow: residues 27–47 (FIGSHVAHTGLICFAAGANTL), 89–109 (IAFIGVFHLICSMVYAGAGLL), 150–170 (FILGHHLIFFGVACIWFVEWA), 211–231 (VMGGHAFLAFVEITGGAFHIA), 251–271 (AVLSWSLAGIGWMAIIAAFWC), and 316–336 (LANVHYYLGFFFIQGHLWHAI).

This sequence belongs to the PsbB/PsbC family. IsiA/Pcb subfamily. As to quaternary structure, the antenna complex consists of divinyl chlorophylls (a and b) and divinyl chlorophyll a/b binding proteins and binds more divinyl chlorophyll b than does the antenna complex from high-light-adapted Prochlorococcus. Divinyl chlorophyll a serves as cofactor. It depends on divinyl chlorophyll b as a cofactor.

The protein resides in the cellular thylakoid membrane. In terms of biological role, the antenna complex functions as a light receptor, it captures and delivers excitation energy to photosystems II and I. The Prochlorales pcb genes are not related to higher plant LHCs. The protein is Divinyl chlorophyll a/b light-harvesting protein PcbF (pcbF) of Prochlorococcus marinus (strain NATL2A).